Reading from the N-terminus, the 160-residue chain is 2-C-methyl-D-erythritol 2,4-cyclodiphosphate synthase (160 aa).

Positions 11 and 13 each coordinate a divalent metal cation. Residues 11-13 (DIH) and 37-38 (HS) contribute to the 4-CDP-2-C-methyl-D-erythritol 2-phosphate site. H45 is an a divalent metal cation binding site. 4-CDP-2-C-methyl-D-erythritol 2-phosphate is bound by residues 59–61 (DIG), 135–138 (TTNE), and R145.

It belongs to the IspF family. Homotrimer. A divalent metal cation is required as a cofactor.

It carries out the reaction 4-CDP-2-C-methyl-D-erythritol 2-phosphate = 2-C-methyl-D-erythritol 2,4-cyclic diphosphate + CMP. The protein operates within isoprenoid biosynthesis; isopentenyl diphosphate biosynthesis via DXP pathway; isopentenyl diphosphate from 1-deoxy-D-xylulose 5-phosphate: step 4/6. In terms of biological role, involved in the biosynthesis of isopentenyl diphosphate (IPP) and dimethylallyl diphosphate (DMAPP), two major building blocks of isoprenoid compounds. Catalyzes the conversion of 4-diphosphocytidyl-2-C-methyl-D-erythritol 2-phosphate (CDP-ME2P) to 2-C-methyl-D-erythritol 2,4-cyclodiphosphate (ME-CPP) with a corresponding release of cytidine 5-monophosphate (CMP). In Nostoc punctiforme (strain ATCC 29133 / PCC 73102), this protein is 2-C-methyl-D-erythritol 2,4-cyclodiphosphate synthase.